A 1259-amino-acid polypeptide reads, in one-letter code: Neural cell adhesion molecule L1 (1259 aa).

Positions 1-19 (MVMMLWYVLPLLLCSPCLL) are cleaved as a signal peptide. Residues 20 to 1122 (IQIPDEYKGH…VSTTGSFASE (1103 aa)) are Extracellular-facing. 6 consecutive Ig-like C2-type domains span residues 35–128 (PVIT…HEIQ), 138–225 (PKET…EPID), 239–327 (PRLL…YYVT), 332–419 (PYWL…AYIY), 424–506 (PARI…NNVT), and 517–600 (TQIT…DEVE). Cystine bridges form between cysteine 57–cysteine 113 and cysteine 157–cysteine 208. N-linked (GlcNAc...) asparagine glycosylation is found at asparagine 100, asparagine 202, asparagine 246, and asparagine 293. Cystine bridges form between cysteine 263–cysteine 311 and cysteine 353–cysteine 403. N-linked (GlcNAc...) asparagine glycosylation is found at asparagine 432, asparagine 489, and asparagine 504. Cysteine 447 and cysteine 496 are joined by a disulfide. A disulfide bridge links cysteine 538 with cysteine 590. 2 consecutive short sequence motifs (cell attachment site) follow at residues 553–555 (RGD) and 562–564 (RGD). Fibronectin type-III domains are found at residues 613–711 (PVPH…TPEA), 716–809 (NPVD…SGED), 811–916 (PQVS…PEGV), 919–1014 (HPEA…MALF), and 1016–1116 (KPDF…VSTT). Asparagine 670 carries an N-linked (GlcNAc...) asparagine glycan. Positions 697–724 (GEPSPVSETVVTPEAAPEKNPVDVRGEG) are disordered. Positions 712–724 (APEKNPVDVRGEG) are enriched in basic and acidic residues. Asparagine 725, asparagine 776, asparagine 824, asparagine 848, asparagine 875, asparagine 968, asparagine 978, asparagine 1021, asparagine 1029, asparagine 1072, and asparagine 1106 each carry an N-linked (GlcNAc...) asparagine glycan. A helical transmembrane segment spans residues 1123–1145 (GWFIAFVSAIILLLLILLILCFI). At 1146–1259 (KRSKGGKYSV…SPINPAVALE (114 aa)) the chain is on the cytoplasmic side. Phosphoserine is present on residues serine 1165, arginine 1179, serine 1180, serine 1183, serine 1196, serine 1245, serine 1246, and serine 1250. Disordered stretches follow at residues 1182–1209 (ESDN…SDDS) and 1228–1259 (IGQY…VALE). A compositionally biased stretch (polar residues) spans 1243 to 1252 (NDSSGATSPI).

This sequence belongs to the immunoglobulin superfamily. L1/neurofascin/NgCAM family. As to quaternary structure, interacts with SHTN1; the interaction occurs in axonal growth cones. Interacts with isoform 2 of BSG. In terms of tissue distribution, isoform 2 is predominantly found in the brain, while isoform 1 is found in the peripheral nervous system.

It localises to the cell membrane. Its subcellular location is the cell projection. It is found in the growth cone. Neural cell adhesion molecule involved in the dynamics of cell adhesion and in the generation of transmembrane signals at tyrosine kinase receptors. During brain development, critical in multiple processes, including neuronal migration, axonal growth and fasciculation, and synaptogenesis. In the mature brain, plays a role in the dynamics of neuronal structure and function, including synaptic plasticity. This chain is Neural cell adhesion molecule L1 (L1cam), found in Rattus norvegicus (Rat).